The sequence spans 310 residues: tRNA uridine(34) hydroxylase (310 aa).

One can recognise a Rhodanese domain in the interval 124–218 (SDPEVLLIDT…YFEEVPQEES (95 aa)). Cysteine 178 acts as the Cysteine persulfide intermediate in catalysis.

Belongs to the TrhO family.

The catalysed reaction is uridine(34) in tRNA + AH2 + O2 = 5-hydroxyuridine(34) in tRNA + A + H2O. Its function is as follows. Catalyzes oxygen-dependent 5-hydroxyuridine (ho5U) modification at position 34 in tRNAs. The chain is tRNA uridine(34) hydroxylase from Pseudomonas putida (strain W619).